We begin with the raw amino-acid sequence, 345 residues long: Adenylosuccinate synthetase (345 aa).

GTP-binding positions include 18-24 (GDEGKGK) and 48-50 (GHT). The active-site Proton acceptor is Asp-19. Residues Asp-19 and Gly-48 each coordinate Mg(2+). IMP contacts are provided by residues 19-22 (DEGK), 46-49 (NAGH), Thr-133, Arg-147, Gln-185, Thr-200, and Arg-262. His-49 (proton donor) is an active-site residue. 258–264 (TVTGRRR) serves as a coordination point for substrate. GTP-binding positions include Arg-264, 290–292 (GLD), and 330–332 (STG).

It belongs to the adenylosuccinate synthetase family. Homodimer. Mg(2+) serves as cofactor.

It localises to the cytoplasm. The catalysed reaction is IMP + L-aspartate + GTP = N(6)-(1,2-dicarboxyethyl)-AMP + GDP + phosphate + 2 H(+). It functions in the pathway purine metabolism; AMP biosynthesis via de novo pathway; AMP from IMP: step 1/2. Plays an important role in the de novo pathway of purine nucleotide biosynthesis. Catalyzes the first committed step in the biosynthesis of AMP from IMP. The protein is Adenylosuccinate synthetase of Methanocaldococcus jannaschii (strain ATCC 43067 / DSM 2661 / JAL-1 / JCM 10045 / NBRC 100440) (Methanococcus jannaschii).